The primary structure comprises 142 residues: Large ribosomal subunit protein uL11 (142 aa).

This sequence belongs to the universal ribosomal protein uL11 family. As to quaternary structure, part of the ribosomal stalk of the 50S ribosomal subunit. Interacts with L10 and the large rRNA to form the base of the stalk. L10 forms an elongated spine to which L12 dimers bind in a sequential fashion forming a multimeric L10(L12)X complex. In terms of processing, one or more lysine residues are methylated.

In terms of biological role, forms part of the ribosomal stalk which helps the ribosome interact with GTP-bound translation factors. This is Large ribosomal subunit protein uL11 from Pasteurella multocida (strain Pm70).